Consider the following 201-residue polypeptide: Small ribosomal subunit protein uS4c (201 aa).

A disordered region spans residues 17-44 (ALPGLTNKKPRNGSDLRNQSRSGKKSQY). Residues 89–149 (MRLDNILFRL…DEQKSRALIQ (61 aa)) form the S4 RNA-binding domain.

It belongs to the universal ribosomal protein uS4 family. As to quaternary structure, part of the 30S ribosomal subunit. Contacts protein S5. The interaction surface between S4 and S5 is involved in control of translational fidelity.

The protein resides in the plastid. It localises to the chloroplast. In terms of biological role, one of the primary rRNA binding proteins, it binds directly to 16S rRNA where it nucleates assembly of the body of the 30S subunit. Its function is as follows. With S5 and S12 plays an important role in translational accuracy. This chain is Small ribosomal subunit protein uS4c (rps4), found in Nicotiana sylvestris (Wood tobacco).